We begin with the raw amino-acid sequence, 387 residues long: 3-ketoacyl-CoA thiolase (387 aa).

Cysteine 91 serves as the catalytic Acyl-thioester intermediate. Residues histidine 343 and cysteine 373 each act as proton acceptor in the active site.

It belongs to the thiolase-like superfamily. Thiolase family. As to quaternary structure, heterotetramer of two alpha chains (FadB) and two beta chains (FadA).

The protein resides in the cytoplasm. It carries out the reaction an acyl-CoA + acetyl-CoA = a 3-oxoacyl-CoA + CoA. Its pathway is lipid metabolism; fatty acid beta-oxidation. Catalyzes the final step of fatty acid oxidation in which acetyl-CoA is released and the CoA ester of a fatty acid two carbons shorter is formed. The polypeptide is 3-ketoacyl-CoA thiolase (Aeromonas hydrophila subsp. hydrophila (strain ATCC 7966 / DSM 30187 / BCRC 13018 / CCUG 14551 / JCM 1027 / KCTC 2358 / NCIMB 9240 / NCTC 8049)).